The sequence spans 188 residues: Kininogen (188 aa).

N36, N150, and N182 each carry an N-linked (GlcNAc...) asparagine glycan.

In terms of processing, bradykinin is released from kininogen by kallikrein. N-glycosylated. Contains O-acetylated sialic acids as terminal elements on biantennary and triantennary N-glycans.

Inhibits papain and ficin (cysteine proteinases) but not trypsin (a serine proteinase). The polypeptide is Kininogen (Anarhichas minor (Arctic spotted wolffish)).